The chain runs to 411 residues: O-glucosyltransferase rumi (411 aa).

The signal sequence occupies residues 1–20 (MLINHLIVVLLISLVGTGGA). Intrachain disulfides connect cysteine 64-cysteine 75, cysteine 73-cysteine 378, cysteine 120-cysteine 126, and cysteine 282-cysteine 305. Aspartate 151 serves as the catalytic Proton donor/acceptor. Residues 192-197 (ATKLHP) form an interaction with the consensus sequence C-X-S-X-[PA]-C in peptide substrates region. UDP-alpha-D-glucose is bound by residues 229–233 (RGSRT), arginine 237, 276–278 (VSF), and 294–298 (AASFR). Residues 408–411 (KDEL) carry the Prevents secretion from ER motif.

This sequence belongs to the glycosyltransferase 90 family.

Its subcellular location is the endoplasmic reticulum lumen. Its pathway is protein modification; protein glycosylation. In terms of biological role, protein O-glucosyltransferase. Catalyzes the reaction that attaches glucose through an O-glycosidic linkage to a conserved serine residue found in the consensus sequence C-X-S-X-[PA]-C in epidermal growth factor-like repeats. Regulates Notch signaling by glucosylating Notch in the ER, glucosylation is required for the correct folding and cleavage of Notch. This is O-glucosyltransferase rumi from Drosophila melanogaster (Fruit fly).